Here is an 87-residue protein sequence, read N- to C-terminus: Toxin RelG (87 aa).

It belongs to the RelE toxin family. Interacts with cognate antitoxin RelF, which neutralizes the toxin. Also interacts with non-cognate antitoxin RelB in vitro, in M.smegmatis this neutralizes the toxicity of this toxin.

Its function is as follows. Toxic component of a type II toxin-antitoxin (TA) system. Has RNase activity and preferentially cleaves at the 3'-end of purine ribonucleotides. Overexpression in M.tuberculosis or M.smegmatis inhibits colony formation in a bacteriostatic rather than bacteriocidal fashion. Its toxic effect is neutralized by coexpression with cognate antitoxin RelB2 (shown only for M.smegmatis). Overexpression also increases the number of gentamicin-tolerant and levofloxacin-tolerant persister cells. In combination with cognate antitoxin RelF represses its own promoter. Has been seen to bind DNA in complex with antitoxin RelF but not alone. The sequence is that of Toxin RelG (relG) from Mycobacterium tuberculosis (strain ATCC 25618 / H37Rv).